Consider the following 207-residue polypeptide: Small ribosomal subunit protein uS4A (207 aa).

The 66-residue stretch at 98–163 folds into the S4 RNA-binding domain; that stretch reads TRLDNLVYRL…SPKFKELKEN (66 aa).

This sequence belongs to the universal ribosomal protein uS4 family. As to quaternary structure, part of the 30S ribosomal subunit. Contacts protein S5. The interaction surface between S4 and S5 is involved in control of translational fidelity.

In terms of biological role, one of the primary rRNA binding proteins, it binds directly to 16S rRNA where it nucleates assembly of the body of the 30S subunit. With S5 and S12 plays an important role in translational accuracy. This Alkaliphilus metalliredigens (strain QYMF) protein is Small ribosomal subunit protein uS4A.